Consider the following 212-residue polypeptide: MSSGVMVDPDVQTSFQKLSEGRKEYRYIIFKIDENKVIVEAAVTQDQLGITGDDYDDSSKAAFDKFVEDVKSRTDNLTDCRYAVFDFKFTCSRVGAGTSKMDKIIFLQICPDGASIKKKMVYASSAAAIKTSLGTGKILQFQVSDESEMSHKELLNNCPDNAPVRRRMLYASSVRALKASLGLESLFQVQASEMSDLDEKSVKSDLMSNQRI.

Residues 3–159 (SGVMVDPDVQ…SHKELLNNCP (157 aa)) form the ADF-H domain.

This sequence belongs to the actin-binding proteins ADF family. As to quaternary structure, interacts with F-actin.

Functionally, depolymerizes growing actin filaments in muscle cells; required for the assembly of actin filaments into the functional contractile myofilament lattice of muscle. Competes with unc-87 for actin binding and inhibits the actin-bundling activity of unc-87. The protein is Actin-depolymerizing factor 1, isoforms a/b of Caenorhabditis elegans.